Here is a 345-residue protein sequence, read N- to C-terminus: Beta-hexosaminidase (345 aa).

Substrate contacts are provided by residues D60, R68, R132, and 162–163 (KH). The active-site Proton donor/acceptor is the H175. Residue D247 is the Nucleophile of the active site.

The protein belongs to the glycosyl hydrolase 3 family. NagZ subfamily.

It is found in the cytoplasm. It catalyses the reaction Hydrolysis of terminal non-reducing N-acetyl-D-hexosamine residues in N-acetyl-beta-D-hexosaminides.. It participates in cell wall biogenesis; peptidoglycan recycling. In terms of biological role, plays a role in peptidoglycan recycling by cleaving the terminal beta-1,4-linked N-acetylglucosamine (GlcNAc) from peptide-linked peptidoglycan fragments, giving rise to free GlcNAc, anhydro-N-acetylmuramic acid and anhydro-N-acetylmuramic acid-linked peptides. The polypeptide is Beta-hexosaminidase (Actinobacillus pleuropneumoniae serotype 5b (strain L20)).